An 834-amino-acid chain; its full sequence is Periplasmic nitrate reductase (834 aa).

Positions 1 to 31 (MSSELTRRNLLKAHAAGIAAATAGIALPAAA) form a signal peptide, tat-type signal. Residues 43 to 99 (IKWSKAPCRFCGTGCGVMVGVKEGKVVATHGDMQAEVNRGLNCIKGYFLSKIMYGKD) enclose the 4Fe-4S Mo/W bis-MGD-type domain. [4Fe-4S] cluster contacts are provided by C50, C53, C57, and C85. Mo-bis(molybdopterin guanine dinucleotide) is bound by residues K87, Q154, N179, C183, 216–223 (WGSNMAEM), 247–251 (STFTH), 266–268 (GTD), M377, Q381, N487, 513–514 (SD), K536, D563, and 723–732 (TGRVLEHWHS). W799 is a substrate binding site. Mo-bis(molybdopterin guanine dinucleotide) is bound by residues N807 and K824.

It belongs to the prokaryotic molybdopterin-containing oxidoreductase family. NasA/NapA/NarB subfamily. In terms of assembly, component of the periplasmic nitrate reductase NapAB complex composed of NapA and NapB. Requires [4Fe-4S] cluster as cofactor. The cofactor is Mo-bis(molybdopterin guanine dinucleotide). Predicted to be exported by the Tat system. The position of the signal peptide cleavage has not been experimentally proven.

It is found in the periplasm. It catalyses the reaction 2 Fe(II)-[cytochrome] + nitrate + 2 H(+) = 2 Fe(III)-[cytochrome] + nitrite + H2O. Its function is as follows. Catalytic subunit of the periplasmic nitrate reductase complex NapAB. Receives electrons from NapB and catalyzes the reduction of nitrate to nitrite. This is Periplasmic nitrate reductase from Agrobacterium fabrum (strain C58 / ATCC 33970) (Agrobacterium tumefaciens (strain C58)).